We begin with the raw amino-acid sequence, 473 residues long: Zinc finger and SCAN domain-containing protein 21 (473 aa).

Lysine 27 participates in a covalent cross-link: Glycyl lysine isopeptide (Lys-Gly) (interchain with G-Cter in SUMO2). The 83-residue stretch at 45–127 folds into the SCAN box domain; the sequence is RQRFRQFGYH…TLLEDLEREL (83 aa). The segment at 127 to 167 is disordered; that stretch reads LDEPGHQVSTPPNEQKPVWEKISSSGTAKESPSSMQPQPLE. Polar residues predominate over residues 148-165; the sequence is ISSSGTAKESPSSMQPQP. Residues lysine 221 and lysine 232 each participate in a glycyl lysine isopeptide (Lys-Gly) (interchain with G-Cter in SUMO2) cross-link. The tract at residues 244–272 is disordered; that stretch reads LENEKGTKPPLQEAGSKKGRESVPTKPTP. The span at 258-272 shows a compositional bias: basic and acidic residues; that stretch reads GSKKGRESVPTKPTP. 7 consecutive C2H2-type zinc fingers follow at residues 277 to 299, 305 to 327, 333 to 354, 360 to 382, 388 to 410, 416 to 438, and 444 to 466; these read YICA…RRTH, YVCT…YRTH, YDCK…QRMH, YQCK…YRIH, YQCN…QRLH, YKCK…HRIH, and YWCH…QRVH. Lysine 349 participates in a covalent cross-link: Glycyl lysine isopeptide (Lys-Gly) (interchain with G-Cter in SUMO2).

Belongs to the krueppel C2H2-type zinc-finger protein family.

It localises to the nucleus. Its function is as follows. Strong transcriptional activator. Plays an important role in spermatogenesis; essential for the progression of meiotic prophase I in spermatocytes. This Pan troglodytes (Chimpanzee) protein is Zinc finger and SCAN domain-containing protein 21 (ZSCAN21).